A 122-amino-acid polypeptide reads, in one-letter code: UPF0102 protein cgR_1859 (122 aa).

It belongs to the UPF0102 family.

This Corynebacterium glutamicum (strain R) protein is UPF0102 protein cgR_1859.